A 351-amino-acid polypeptide reads, in one-letter code: sn-glycerol-3-phosphate import ATP-binding protein UgpC (351 aa).

The 232-residue stretch at 4-235 (IVLDNVRKSY…PASTFVATFI (232 aa)) folds into the ABC transporter domain. 37-44 (GPSGCGKS) is a binding site for ATP.

The protein belongs to the ABC transporter superfamily. sn-glycerol-3-phosphate importer (TC 3.A.1.1.3) family. In terms of assembly, the complex is composed of two ATP-binding proteins (UgpC), two transmembrane proteins (UgpA and UgpE) and a solute-binding protein (UgpB).

It is found in the cell inner membrane. The catalysed reaction is sn-glycerol 3-phosphate(out) + ATP + H2O = sn-glycerol 3-phosphate(in) + ADP + phosphate + H(+). Its function is as follows. Part of the ABC transporter complex UgpBAEC involved in sn-glycerol-3-phosphate (G3P) import. Responsible for energy coupling to the transport system. The polypeptide is sn-glycerol-3-phosphate import ATP-binding protein UgpC (Brucella abortus biovar 1 (strain 9-941)).